The chain runs to 379 residues: Succinyl-diaminopimelate desuccinylase (379 aa).

Zn(2+) is bound at residue histidine 70. Residue aspartate 72 is part of the active site. Aspartate 103 is a Zn(2+) binding site. The Proton acceptor role is filled by glutamate 137. Residues glutamate 138, glutamate 166, and histidine 352 each contribute to the Zn(2+) site.

The protein belongs to the peptidase M20A family. DapE subfamily. Homodimer. Zn(2+) is required as a cofactor. Requires Co(2+) as cofactor.

The catalysed reaction is N-succinyl-(2S,6S)-2,6-diaminopimelate + H2O = (2S,6S)-2,6-diaminopimelate + succinate. It participates in amino-acid biosynthesis; L-lysine biosynthesis via DAP pathway; LL-2,6-diaminopimelate from (S)-tetrahydrodipicolinate (succinylase route): step 3/3. Functionally, catalyzes the hydrolysis of N-succinyl-L,L-diaminopimelic acid (SDAP), forming succinate and LL-2,6-diaminopimelate (DAP), an intermediate involved in the bacterial biosynthesis of lysine and meso-diaminopimelic acid, an essential component of bacterial cell walls. This chain is Succinyl-diaminopimelate desuccinylase, found in Shewanella sp. (strain W3-18-1).